The sequence spans 146 residues: UPF0178 protein R01393 (146 aa).

The protein belongs to the UPF0178 family.

This is UPF0178 protein R01393 from Rhizobium meliloti (strain 1021) (Ensifer meliloti).